The primary structure comprises 177 residues: MKIVGDSEHFKQPYDSDEEYVSKTEDKRDCEAAQKVGMELVSLSKTQLDKIELDEHLYDSIQQAHKIKPKTEAYRRHMQYIGKLMRHVDVEPIKAALAVVLNKNSNETAKLQIFEKMRERLLSQGDSEIQTLVEHYPQLDRQKLRTLVRQATKELAKGPESKSSKELFKYLRSEIQD.

The tract at residues 1-26 is disordered; the sequence is MKIVGDSEHFKQPYDSDEEYVSKTED.

The protein belongs to the DarP family.

It is found in the cytoplasm. In terms of biological role, member of a network of 50S ribosomal subunit biogenesis factors which assembles along the 30S-50S interface, preventing incorrect 23S rRNA structures from forming. Promotes peptidyl transferase center (PTC) maturation. The sequence is that of Dual-action ribosomal maturation protein DarP from Shewanella sp. (strain MR-4).